The primary structure comprises 1483 residues: Guanylyl cyclase, membrane (1483 aa).

The next 6 helical transmembrane spans lie at 50–70 (ISIIFLTSVLFIGTMTAYISP), 143–163 (FILRMITIGLLLFYFIFTFTA), 168–188 (LWKLFTTITLFLVSCIVLIFE), 198–218 (MVLLFIIIAISSGMTFLPSML), 219–239 (ASGGLCLFFFFYFMFYSQIAG), and 242–262 (MVLLSLVLLISWIILMIISRF). Positions 323–376 (KKDEESNLTGKKQSKVVVSPPPPPTAAAPQQQDNEISTPQNSRKIVDPQSPSSL) are disordered. A compositionally biased stretch (polar residues) spans 355–376 (DNEISTPQNSRKIVDPQSPSSL). Residues 395 to 517 (TVLFCEIVNF…DTINTSSRMA (123 aa)) form the Guanylate cyclase 1 domain. Disordered regions lie at residues 598-619 (NNTIGKGDDIASGSATGPTHPN) and 672-838 (LTSP…GDDF). The span at 610–619 (GSATGPTHPN) shows a compositional bias: polar residues. 3 stretches are compositionally biased toward low complexity: residues 672–684 (LTSPQQQPLPQQS), 693–712 (SPRLSSTPQSTSTLQHSSST), and 720–765 (NNNN…NNNN). Residues 772 to 786 (SPISQNTTPTGSLSL) show a composition bias toward polar residues. Helical transmembrane passes span 907–927 (ILASMLMIVALFGLSGLVDYF), 982–1002 (IITGVRYGFVFFCLIVIYVVS), 1016–1036 (VVMVFFIVLAAVLIVLTSVPP), 1040–1060 (IPLDSVILSIEIMFITICYNF), 1061–1081 (SGIKFWYSNIVCAFCIIFIEI), and 1094–1114 (IYLSHNYYLITAVLINIITSY). The Guanylate cyclase 2 domain occupies 1168-1296 (TIFLSDIVGF…ESVQITQQME (129 aa)). Residues Asp-1173, Ile-1174, and Asp-1217 each contribute to the Mg(2+) site. Disordered regions lie at residues 1348 to 1369 (QPEVKTRSVSVSKSNFGGSLQY) and 1393 to 1483 (NQND…SESS). Residues 1354–1369 (RSVSVSKSNFGGSLQY) show a composition bias toward polar residues. Low complexity predominate over residues 1405–1416 (NENGNESSSSNI). The segment covering 1432–1444 (NEDDESSYEDDQE) has biased composition (acidic residues). Residues 1446–1465 (NQYLNNSENNKNNNNNSNQI) are compositionally biased toward low complexity.

Belongs to the adenylyl cyclase class-4/guanylyl cyclase family. In terms of assembly, homodimer. The cofactor is Mg(2+).

Its subcellular location is the membrane. It catalyses the reaction GTP = 3',5'-cyclic GMP + diphosphate. Activated by guanosine 5'-3-O-(thio)triphosphate (GTPgammaS). Inhibited by calcium. Its function is as follows. Synthesizes cyclic GMP (cGMP) from GTP, after activation by heterotrimeric or monomeric G proteins. Involved in chemotaxis. The sequence is that of Guanylyl cyclase, membrane (gca) from Dictyostelium discoideum (Social amoeba).